Consider the following 82-residue polypeptide: Delta-actitoxin-Aeq2b 2 (82 aa).

Residues 1–19 (MNRLMILVFAAVFLALASA) form the signal peptide. The propeptide occupies 20-26 (DEDVDIA). Cystine bridges form between Cys-32–Cys-79, Cys-34–Cys-69, and Cys-62–Cys-80.

It belongs to the sea anemone sodium channel inhibitory toxin family. Type I subfamily.

It localises to the secreted. Its subcellular location is the nematocyst. Its function is as follows. Binds specifically to voltage-gated sodium channels (Nav), thereby delaying their inactivation during signal transduction. Causes death to crabs. The polypeptide is Delta-actitoxin-Aeq2b 2 (Actinia equina (Beadlet anemone)).